The chain runs to 425 residues: Histidine--tRNA ligase (425 aa).

Belongs to the class-II aminoacyl-tRNA synthetase family. In terms of assembly, homodimer.

It localises to the cytoplasm. The catalysed reaction is tRNA(His) + L-histidine + ATP = L-histidyl-tRNA(His) + AMP + diphosphate + H(+). The chain is Histidine--tRNA ligase from Listeria monocytogenes serovar 1/2a (strain ATCC BAA-679 / EGD-e).